Reading from the N-terminus, the 83-residue chain is U2-hexatoxin-Hi1a (83 aa).

The N-terminal stretch at 1-23 (MRNTTFLVLNVMLLVSVALFCAA) is a signal peptide. Positions 24–45 (DPEMEKSSFAEILDTGNPEQER) are excised as a propeptide. 4 cysteine pairs are disulfide-bonded: Cys47–Cys63, Cys54–Cys68, Cys62–Cys78, and Cys70–Cys76.

It belongs to the neurotoxin 07 (Beta/delta-agtx) family. Expressed by the venom gland.

The protein localises to the secreted. Its function is as follows. Inhibits sodium channels (Nav) of insects. This chain is U2-hexatoxin-Hi1a, found in Hadronyche infensa (Fraser island funnel-web spider).